The sequence spans 690 residues: Glutaminase A (690 aa).

Positions 1–20 (MMHFLSFCLSVASLVSYAGA) are cleaved as a signal peptide. Asn-80, Asn-96, Asn-435, Asn-508, Asn-528, Asn-538, and Asn-571 each carry an N-linked (GlcNAc...) asparagine glycan.

This sequence belongs to the fungal glutaminase gtaA family.

It localises to the secreted. The enzyme catalyses L-glutamine + H2O = L-glutamate + NH4(+). With respect to regulation, activity is inhibited by about 80% in the presence of 18% sodium chloride. Its function is as follows. Glutaminase catalyzes the hydrolysis of glutamine to glutamic acid and plays a key role in nitrogen metabolism. Catalyzes the hydrolysis not only of L-glutamine but also of D-glutamine. In Aspergillus oryzae (strain ATCC 42149 / RIB 40) (Yellow koji mold), this protein is Glutaminase A.